Here is a 215-residue protein sequence, read N- to C-terminus: Oligoribonuclease (215 aa).

In terms of domain architecture, Exonuclease spans 5 to 170; that stretch reads LVWIDCEMTG…ADIHESIREL (166 aa). Tyr127 is an active-site residue.

The protein belongs to the oligoribonuclease family.

It is found in the cytoplasm. 3'-to-5' exoribonuclease specific for small oligoribonucleotides. The sequence is that of Oligoribonuclease from Mycobacterium ulcerans (strain Agy99).